A 489-amino-acid chain; its full sequence is Beta-1,3-glucosyltransferase (489 aa).

Residue M1 is a topological domain, cytoplasmic. The chain crosses the membrane as a helical; Signal-anchor for type II membrane protein span at residues 2-22 (RPPALLALFSCSAAFALMSEE). Over 23–489 (IKEKVTPSQD…ETQKDPREEL (467 aa)) the chain is Lumenal. N78 is a glycosylation site (N-linked (GlcNAc...) asparagine). The Prevents secretion from ER motif lies at 486-489 (REEL).

It belongs to the glycosyltransferase 31 family.

Its subcellular location is the endoplasmic reticulum membrane. Its pathway is protein modification; protein glycosylation. Its function is as follows. O-glucosyltransferase that transfers glucose toward fucose with a beta-1,3 linkage. Specifically glucosylates O-linked fucosylglycan on TSP type-1 domains of proteins, thereby contributing to elongation of O-fucosylglycan. The sequence is that of Beta-1,3-glucosyltransferase from Mus musculus (Mouse).